The primary structure comprises 93 residues: Large ribosomal subunit protein bL31B (93 aa).

The protein belongs to the bacterial ribosomal protein bL31 family. Type B subfamily. As to quaternary structure, part of the 50S ribosomal subunit.

The polypeptide is Large ribosomal subunit protein bL31B (Psychrobacter arcticus (strain DSM 17307 / VKM B-2377 / 273-4)).